Reading from the N-terminus, the 669-residue chain is Protein adenylyltransferase SelO, mitochondrial (669 aa).

The transit peptide at 1–115 (MAVYRAALGA…LGLGAPPARE (115 aa)) directs the protein to the mitochondrion. Gly-153, Gly-155, Lys-176, Asp-188, Gly-189, Arg-246, and Arg-253 together coordinate ATP. Asp-338 functions as the Proton acceptor in the catalytic mechanism. Asn-339 and Asp-348 together coordinate Mg(2+). Residue Asp-348 participates in ATP binding. The disordered stretch occupies residues 634–654 (ATDAEATEADGADGRQRSYSS). Thr-635 bears the Phosphothreonine mark. A Phosphoserine modification is found at Ser-653. Residue Sec-667 is a non-standard amino acid, selenocysteine.

Belongs to the SELO family. The cofactor is Mg(2+).

The protein localises to the mitochondrion. The enzyme catalyses L-tyrosyl-[protein] + ATP = O-(5'-adenylyl)-L-tyrosyl-[protein] + diphosphate. It catalyses the reaction L-threonyl-[protein] + ATP = 3-O-(5'-adenylyl)-L-threonyl-[protein] + diphosphate. The catalysed reaction is L-seryl-[protein] + ATP = 3-O-(5'-adenylyl)-L-seryl-[protein] + diphosphate. In terms of biological role, catalyzes the transfer of adenosine 5'-monophosphate (AMP) to Ser, Thr and Tyr residues of target proteins (AMPylation). May be a redox-active mitochondrial selenoprotein which interacts with a redox target protein. This chain is Protein adenylyltransferase SelO, mitochondrial, found in Homo sapiens (Human).